A 253-amino-acid polypeptide reads, in one-letter code: Sec-independent protein translocase protein TatC (253 aa).

Helical transmembrane passes span 19–39, 70–90, 109–129, 154–174, and 194–214; these read ILII…LATP, FAFT…LWAF, IAFF…FPFL, FLFQ…VVMF, and FFVL…SHLM.

This sequence belongs to the TatC family. Forms a complex with TatA.

Its subcellular location is the cell membrane. In terms of biological role, part of the twin-arginine translocation (Tat) system that transports large folded proteins containing a characteristic twin-arginine motif in their signal peptide across membranes. The chain is Sec-independent protein translocase protein TatC from Halalkalibacterium halodurans (strain ATCC BAA-125 / DSM 18197 / FERM 7344 / JCM 9153 / C-125) (Bacillus halodurans).